Reading from the N-terminus, the 532-residue chain is Cytochrome P450 monooxygenase criE (532 aa).

The chain crosses the membrane as a helical span at residues 18 to 38 (VSPAALSWAVVAVYIGTFFWL). Cys-441 is a heme binding site.

The protein belongs to the cytochrome P450 family. Heme is required as a cofactor.

It is found in the membrane. It carries out the reaction preechinulin + reduced [NADPH--hemoprotein reductase] + O2 = neoechinulin A + oxidized [NADPH--hemoprotein reductase] + 2 H2O + H(+). Its pathway is secondary metabolite biosynthesis. It functions in the pathway alkaloid biosynthesis. Its function is as follows. Cytochrome P450 monooxygenase; part of the gene cluster that mediates the biosynthesis of echinulin family alkaloid. The pathway begins with the biosynthesis of the cyclic dipeptide cyclo-L-Trp-L-Ala (cyclo-TA) by the NRPS criC via condensation of L-alanine and L-tryptophan. The prenyltransferase criA then catalyzes the first prenylation step, a reverse prenylation reaction at C2, to yield preechinulin. Preechinulin is the substrate of the cytochrome P450 monooxygenase criE that catalyzes the formation of the double bond between C10 and C11 to produce neoechulin A. The unique prenyltransferase criF functions as a competitive enzyme with criE for preechinulin metabolization and uses preechinulin for effective regiospecific prenylations. Preechinulin is prenylated by criF at C5 or C7. C7-prenylation leads to accumulation of tardioxopiperazine B without further modification by criF. In contrast, the C5-prenylated tardioxopiperazine A can be prenylated again by criF, predominantly at C7 to form echinulin or less frequently at C4 to give variecolorin L. CriF also accepts neoechilunin A to produce varlecolorin G (prenylation at C5) or isoechinulin A (prenylation at C7). CriF further converts isoechinulin A into dehydroechinulin. Moreover, a yet unidentified enzyme can also convert neoechilunin A into neoechilunin B by introducing a double bond between positions C14 and C17 and thus provides a further substrate to criF for C5 and C7 prenylation. This Aspergillus cristatus (Chinese Fuzhuan brick tea-fermentation fungus) protein is Cytochrome P450 monooxygenase criE.